We begin with the raw amino-acid sequence, 372 residues long: Mitogen-activated protein kinase kinase kinase 17 (372 aa).

Positions 3 to 259 (WTRGRILGRG…ATQLLNHPFL (257 aa)) constitute a Protein kinase domain. Residues 9–17 (LGRGSTATV) and Lys32 each bind ATP. Catalysis depends on Asp126, which acts as the Proton acceptor. Position 312 is a phosphoserine (Ser312).

The protein belongs to the protein kinase superfamily. Ser/Thr protein kinase family. In terms of assembly, binds to MKK3.

It localises to the nucleus. The enzyme catalyses L-seryl-[protein] + ATP = O-phospho-L-seryl-[protein] + ADP + H(+). It carries out the reaction L-threonyl-[protein] + ATP = O-phospho-L-threonyl-[protein] + ADP + H(+). Functionally, component of the abscisic acid (ABA) signaling pathway that may act as ABA signal transducer in the context of abiotic stresses. Triggers MPK7 activation in a MKK3-dependent manner. Mediates the ABA-dependent activation of the MKK3-MPK7 module. This is Mitogen-activated protein kinase kinase kinase 17 from Arabidopsis thaliana (Mouse-ear cress).